The chain runs to 451 residues: tRNA modification GTPase MnmE (451 aa).

(6S)-5-formyl-5,6,7,8-tetrahydrofolate is bound by residues R28, E85, and K124. The TrmE-type G domain occupies 220-377 (GMNVVLVGQP…LRSELLRVAG (158 aa)). N230 contributes to the K(+) binding site. Residues 230 to 235 (NVGKSS), 249 to 255 (TDIAGTT), and 274 to 277 (DTAG) contribute to the GTP site. S234 contacts Mg(2+). T249, I251, and T254 together coordinate K(+). T255 lines the Mg(2+) pocket. K451 serves as a coordination point for (6S)-5-formyl-5,6,7,8-tetrahydrofolate.

This sequence belongs to the TRAFAC class TrmE-Era-EngA-EngB-Septin-like GTPase superfamily. TrmE GTPase family. Homodimer. Heterotetramer of two MnmE and two MnmG subunits. It depends on K(+) as a cofactor.

It is found in the cytoplasm. Functionally, exhibits a very high intrinsic GTPase hydrolysis rate. Involved in the addition of a carboxymethylaminomethyl (cmnm) group at the wobble position (U34) of certain tRNAs, forming tRNA-cmnm(5)s(2)U34. The protein is tRNA modification GTPase MnmE of Aromatoleum aromaticum (strain DSM 19018 / LMG 30748 / EbN1) (Azoarcus sp. (strain EbN1)).